The primary structure comprises 52 residues: Phospholamban (52 aa).

Residue Met-1 is modified to N-acetylmethionine. Residues 1-31 (MEKVQYLTRSAIRRASTIEMPQQARQKLQNL) lie on the Cytoplasmic side of the membrane. Ser-16 carries the phosphoserine; by PKA and DMPK modification. The segment at 16-22 (STIEMPQ) is involved in HAX1 binding. Position 17 is a phosphothreonine; by CaMK2 (Thr-17). Residues 32 to 52 (FINFCLILICLLLICIIVMLL) form a helical membrane-spanning segment. A lipid anchor (S-palmitoyl cysteine) is attached at Cys-36.

It belongs to the phospholamban family. Homopentamer. Can also form heterooligomers with other sarcoplasmic/endoplasmic reticulum calcium ATPase (SERCA) regulators ARLN, ERLN, SLN and STRIT1/DWORF. Monomer. Interacts with HAX1. Interacts as a monomer with ATP2A2; the interaction decreases ATP2A2 Ca(2+) affinity. Interacts with VMP1; VMP1 competes with PLN and SLN to prevent them from forming an inhibitory complex with ATP2A2. Interacts with S100A1 in a Ca(2+)-dependent manner. In terms of processing, phosphorylation by PKA abolishes the inhibition of ATP2A2-mediated calcium uptake. Phosphorylated at Thr-17 by CaMK2, and in response to beta-adrenergic stimulation. Phosphorylation by DMPK may stimulate sarcoplasmic reticulum calcium uptake in cardiomyocytes. Palmitoylated by ZDHHC16, promoting formation of the homopentamer. Post-translationally, in elongated spermatids, proteolytically cleaved by SPPL2C which modulates intracellular Ca(2+) homeostasis. In terms of tissue distribution, heart muscle (at protein level).

It is found in the endoplasmic reticulum membrane. It localises to the sarcoplasmic reticulum membrane. The protein resides in the mitochondrion membrane. Its subcellular location is the membrane. Its function is as follows. Reversibly inhibits the activity of ATP2A2/SERCA2 in cardiac sarcoplasmic reticulum by decreasing the apparent affinity of the ATPase for Ca(2+). Binds preferentially to the ATP-bound E1 conformational form of ATP2A2 which predominates at low Ca(2+) concentrations during the diastolic phase of the cardiac cycle. Inhibits ATP2A2 Ca(2+) affinity by disrupting its allosteric activation by ATP. Modulates the contractility of the heart muscle in response to physiological stimuli via its effects on ATP2A2. Modulates calcium re-uptake during muscle relaxation and plays an important role in calcium homeostasis in the heart muscle. The degree of ATP2A2 inhibition depends on the oligomeric state of PLN. ATP2A2 inhibition is alleviated by PLN phosphorylation. Also inhibits the activity of ATP2A3/SERCA3. Controls intracellular Ca(2+) levels in elongated spermatids and may play a role in germ cell differentiation. In the thalamic reticular nucleus of the brain, plays a role in the regulation of sleep patterns and executive functioning. This Homo sapiens (Human) protein is Phospholamban.